A 107-amino-acid chain; its full sequence is Heme-degrading monooxygenase (107 aa).

The ABM domain maps to 2–93; that stretch reads VIVANKTLIR…DYILGNEIEF (92 aa). Fe cation is bound at residue N6. Heme is bound at residue H76.

Belongs to the antibiotic biosynthesis monooxygenase family. Heme-degrading monooxygenase IsdG subfamily. In terms of assembly, homodimer.

Its subcellular location is the cytoplasm. It catalyses the reaction heme b + 3 reduced [NADPH--hemoprotein reductase] + 3 O2 = biliverdin IXalpha + CO + Fe(2+) + 3 oxidized [NADPH--hemoprotein reductase] + 3 H2O + H(+). In terms of biological role, allows bacterial pathogens to use the host heme as an iron source. Catalyzes the oxidative degradation of the heme macrocyclic porphyrin ring to the biliverdin in the presence of a suitable electron donor such as ascorbate or NADPH--cytochrome P450 reductase, with subsequent release of free iron. In Shouchella clausii (strain KSM-K16) (Alkalihalobacillus clausii), this protein is Heme-degrading monooxygenase.